The chain runs to 166 residues: ATP synthase subunit b 1 (166 aa).

Residues 7–29 traverse the membrane as a helical segment; that stretch reads FWTALAFVLFFVIFGRKLWVAIT.

It belongs to the ATPase B chain family. F-type ATPases have 2 components, F(1) - the catalytic core - and F(0) - the membrane proton channel. F(1) has five subunits: alpha(3), beta(3), gamma(1), delta(1), epsilon(1). F(0) has three main subunits: a(1), b(2) and c(10-14). The alpha and beta chains form an alternating ring which encloses part of the gamma chain. F(1) is attached to F(0) by a central stalk formed by the gamma and epsilon chains, while a peripheral stalk is formed by the delta and b chains.

It is found in the cell inner membrane. Functionally, f(1)F(0) ATP synthase produces ATP from ADP in the presence of a proton or sodium gradient. F-type ATPases consist of two structural domains, F(1) containing the extramembraneous catalytic core and F(0) containing the membrane proton channel, linked together by a central stalk and a peripheral stalk. During catalysis, ATP synthesis in the catalytic domain of F(1) is coupled via a rotary mechanism of the central stalk subunits to proton translocation. In terms of biological role, component of the F(0) channel, it forms part of the peripheral stalk, linking F(1) to F(0). The chain is ATP synthase subunit b 1 from Gluconobacter oxydans (strain 621H) (Gluconobacter suboxydans).